The sequence spans 160 residues: SsrA-binding protein (160 aa).

The protein belongs to the SmpB family.

Its subcellular location is the cytoplasm. In terms of biological role, required for rescue of stalled ribosomes mediated by trans-translation. Binds to transfer-messenger RNA (tmRNA), required for stable association of tmRNA with ribosomes. tmRNA and SmpB together mimic tRNA shape, replacing the anticodon stem-loop with SmpB. tmRNA is encoded by the ssrA gene; the 2 termini fold to resemble tRNA(Ala) and it encodes a 'tag peptide', a short internal open reading frame. During trans-translation Ala-aminoacylated tmRNA acts like a tRNA, entering the A-site of stalled ribosomes, displacing the stalled mRNA. The ribosome then switches to translate the ORF on the tmRNA; the nascent peptide is terminated with the 'tag peptide' encoded by the tmRNA and targeted for degradation. The ribosome is freed to recommence translation, which seems to be the essential function of trans-translation. In Nocardia farcinica (strain IFM 10152), this protein is SsrA-binding protein.